The sequence spans 438 residues: Sphingomyelinase phosphodiesterase D (438 aa).

A signal peptide spans 1 to 17 (MKIILILVLVLVVSINA). 2 residues coordinate Zn(2+): Asp-27 and His-29. Asn-40 is a glycosylation site (N-linked (GlcNAc...) asparagine). Zn(2+)-binding residues include Asp-111 and Asn-148. Asn-160 is a glycosylation site (N-linked (GlcNAc...) asparagine). Position 247 (His-247) interacts with Zn(2+). Asn-271 carries an N-linked (GlcNAc...) asparagine glycan. 2 residues coordinate Zn(2+): His-287 and His-289. 2 N-linked (GlcNAc...) asparagine glycosylation sites follow: Asn-338 and Asn-359.

It belongs to the acid sphingomyelinase family. Zn(2+) serves as cofactor.

The protein resides in the secreted. The protein is Sphingomyelinase phosphodiesterase D (sgmD) of Dictyostelium discoideum (Social amoeba).